We begin with the raw amino-acid sequence, 355 residues long: Probable L-aspartate decarboxylase (355 aa).

Residue Lys-210 is modified to N6-(pyridoxal phosphate)lysine.

It belongs to the group II decarboxylase family. MfnA subfamily. It depends on pyridoxal 5'-phosphate as a cofactor.

The enzyme catalyses L-aspartate + H(+) = beta-alanine + CO2. It functions in the pathway cofactor biosynthesis; coenzyme A biosynthesis. In terms of biological role, catalyzes the decarboxylation of L-aspartate to produce beta-alanine. This chain is Probable L-aspartate decarboxylase, found in Halobacterium salinarum (strain ATCC 29341 / DSM 671 / R1).